The following is a 300-amino-acid chain: U1 small nuclear ribonucleoprotein 70 kDa homolog (300 aa).

The 92-residue stretch at 107–198 (RTIFIGRLPY…RTVKYFKPRR (92 aa)) folds into the RRM domain. Disordered regions lie at residues 204 to 248 (GGRG…AYSA) and 263 to 300 (NRPL…APDY). The segment covering 265–279 (PLLSAATPTAAVTSV) has biased composition (low complexity).

In terms of assembly, component of the spliceosome, where it is associated with snRNP U1. Binds stem loop I of U1 snRNA. Interacts with mRNA.

It localises to the nucleus. Involved in nuclear mRNA splicing. This Saccharomyces cerevisiae (strain ATCC 204508 / S288c) (Baker's yeast) protein is U1 small nuclear ribonucleoprotein 70 kDa homolog (SNP1).